Reading from the N-terminus, the 146-residue chain is MORN repeat-containing protein 4 (146 aa).

4 MORN repeats span residues 16-38 (YRGEWKEGRRHGFGQLMFADGGT), 39-61 (YLGHFENGLFNGFGVLTFSDGSR), 62-84 (YEGEFAQGKFNGVGVFIRHDNMT), and 85-107 (FEGEFKNGRVDGLGLLTFPDGSH).

As to quaternary structure, interacts with MYO3A. Retina.

The protein localises to the cytoplasm. It is found in the cell projection. The protein resides in the filopodium tip. It localises to the stereocilium. Plays a role in promoting axonal degeneration following neuronal injury by toxic insult or trauma. The chain is MORN repeat-containing protein 4 (MORN4) from Bos taurus (Bovine).